We begin with the raw amino-acid sequence, 247 residues long: MLLLSLALTLISAPASDTCDTKDVCIGSPGIPGTPGSHGLPGRDGRDGVKGDPGPPGPMGPPGGMPGLPGRDGLIGAPGVPGERGDKGEPGERGPPGLPAYLDEELQATLHELRHHALQSIGVLSLQGSMKAVGEKIFSTNGQSVNFDAIREVCARAGGRIAVPRSLEENEAIASIVKERNTYAYLGLAEGPTAGDFYYLDGDPVNYTNWYPGEPRGQGREKCVEMYTDGKWNDKNCLQYRLVICEF.

The first 15 residues, 1–15 (MLLLSLALTLISAPA), serve as a signal peptide directing secretion. A Collagen-like domain is found at 27–99 (GSPGIPGTPG…PGERGPPGLP (73 aa)). Residues Pro-29, Pro-32, Pro-35, Pro-41, Pro-53, Pro-56, Pro-62, Pro-66, and Pro-69 each carry the 4-hydroxyproline modification. A disordered region spans residues 30–100 (GIPGTPGSHG…GERGPPGLPA (71 aa)). Residues 41-50 (PGRDGRDGVK) are compositionally biased toward basic and acidic residues. Residues 53 to 64 (PGPPGPMGPPGG) show a composition bias toward pro residues. The segment covering 83 to 92 (ERGDKGEPGE) has biased composition (basic and acidic residues). The C-type lectin domain maps to 132-247 (AVGEKIFSTN…LQYRLVICEF (116 aa)). 2 disulfides stabilise this stretch: Cys-154–Cys-245 and Cys-223–Cys-237. An N-linked (GlcNAc...) asparagine glycan is attached at Asn-206. Ca(2+)-binding residues include Glu-214, Arg-216, Asn-233, and Asp-234.

The protein belongs to the SFTPA family. Oligomeric complex of 6 set of homotrimers.

It is found in the secreted. It localises to the extracellular space. The protein localises to the extracellular matrix. Its subcellular location is the surface film. In presence of calcium ions, it binds to surfactant phospholipids and contributes to lower the surface tension at the air-liquid interface in the alveoli of the mammalian lung and is essential for normal respiration. Enhances the expression of MYO18A/SP-R210 on alveolar macrophages. This is Pulmonary surfactant-associated protein A (SFTPA1) from Oryctolagus cuniculus (Rabbit).